The primary structure comprises 240 residues: UDP-2,3-diacylglucosamine hydrolase (240 aa).

The Mn(2+) site is built by D8, H10, D41, N79, and H114. A substrate-binding site is contributed by 79–80 (NR). D122, S160, N164, K167, and H195 together coordinate substrate. Residues H195 and H197 each coordinate Mn(2+).

Belongs to the LpxH family. It depends on Mn(2+) as a cofactor.

The protein localises to the cell inner membrane. The enzyme catalyses UDP-2-N,3-O-bis[(3R)-3-hydroxytetradecanoyl]-alpha-D-glucosamine + H2O = 2-N,3-O-bis[(3R)-3-hydroxytetradecanoyl]-alpha-D-glucosaminyl 1-phosphate + UMP + 2 H(+). It participates in glycolipid biosynthesis; lipid IV(A) biosynthesis; lipid IV(A) from (3R)-3-hydroxytetradecanoyl-[acyl-carrier-protein] and UDP-N-acetyl-alpha-D-glucosamine: step 4/6. Its function is as follows. Hydrolyzes the pyrophosphate bond of UDP-2,3-diacylglucosamine to yield 2,3-diacylglucosamine 1-phosphate (lipid X) and UMP by catalyzing the attack of water at the alpha-P atom. Involved in the biosynthesis of lipid A, a phosphorylated glycolipid that anchors the lipopolysaccharide to the outer membrane of the cell. This is UDP-2,3-diacylglucosamine hydrolase from Salmonella schwarzengrund (strain CVM19633).